A 414-amino-acid chain; its full sequence is Cytochrome c-554 (414 aa).

The N-terminal stretch at 1-24 (MQSSRPSDRQLAIVVSVAVGIVVA) is a signal peptide. Residues M110, C131, C134, H135, M154, C179, C182, H183, M283, C294, C297, H298, C378, C381, and H382 each coordinate heme.

Post-translationally, binds 4 heme groups per subunit. In terms of processing, the N-terminus is blocked.

It localises to the periplasm. In terms of biological role, serves as the immediate electron donor to the oxidized BChl2 (bacteriochlorophyll dimer) that is oxidized in the first step of light-induced charge separation. Can also oxidize low-potential substrates. This chain is Cytochrome c-554 (puf2C), found in Chloroflexus aurantiacus (strain ATCC 29366 / DSM 635 / J-10-fl).